Consider the following 411-residue polypeptide: MTTEIRVPTLGESVTEATVGKWFKKLGEAVAIDEPLVELETDKVTVEVPSPVAGKLFEIIAKEGDTVEVNALLGAVEAGAASVAKSPSSSETSVSAAPSELEQSSSSNTMPPAPSAAKLMAENNIAKSDILGSGKRGQILKEDVLNVLAQGVKTSPPAVSASSSTPVSVSSSAVAPVQEMREERVRMTKLRQTIARRLKDAQNTAAMLTTFNEVDMSAVMGLRKRYKDLFEKKHGVKLGFMGFFTKAVCHALKELPAVNAEIDGTDIIYKNYVNAGIAVGTDKGLVVPVVRDADQMSLAEIEKEIGRLGRLARDGKLAVSDMQGGTFTITNGGVYGSLMSTPILNAPQSGILGMHAIKERAMVVDGQIAIRPMMYLALSYDHRIVDGQEAVTFLVRVKESLEDPERLVLDL.

The region spanning 2-77 (TTEIRVPTLG…EVNALLGAVE (76 aa)) is the Lipoyl-binding domain. An N6-lipoyllysine modification is found at Lys43. Low complexity predominate over residues 82-100 (SVAKSPSSSETSVSAAPSE). The segment at 82–115 (SVAKSPSSSETSVSAAPSELEQSSSSNTMPPAPS) is disordered. Over residues 101-110 (LEQSSSSNTM) the composition is skewed to polar residues. One can recognise a Peripheral subunit-binding (PSBD) domain in the interval 111–148 (PPAPSAAKLMAENNIAKSDILGSGKRGQILKEDVLNVL). Catalysis depends on residues His382 and Asp386.

It belongs to the 2-oxoacid dehydrogenase family. As to quaternary structure, forms a 24-polypeptide structural core with octahedral symmetry. Part of the 2-oxoglutarate dehydrogenase (OGDH) complex composed of E1 (2-oxoglutarate dehydrogenase), E2 (dihydrolipoamide succinyltransferase) and E3 (dihydrolipoamide dehydrogenase); the complex contains multiple copies of the three enzymatic components (E1, E2 and E3). It depends on (R)-lipoate as a cofactor.

It carries out the reaction N(6)-[(R)-dihydrolipoyl]-L-lysyl-[protein] + succinyl-CoA = N(6)-[(R)-S(8)-succinyldihydrolipoyl]-L-lysyl-[protein] + CoA. Its pathway is amino-acid degradation; L-lysine degradation via saccharopine pathway; glutaryl-CoA from L-lysine: step 6/6. Functionally, E2 component of the 2-oxoglutarate dehydrogenase (OGDH) complex which catalyzes the second step in the conversion of 2-oxoglutarate to succinyl-CoA and CO(2). The polypeptide is Dihydrolipoyllysine-residue succinyltransferase component of 2-oxoglutarate dehydrogenase complex (sucB) (Bartonella vinsonii subsp. berkhoffii).